The sequence spans 109 residues: MEQFEATSVEQAYLRWKEGKTALVDIRDPQSYEAGHAPGAFHLTNSSLHTFMQQTDFDQPVMVMCYHGNSSKGAAQYLLQQGFDVVYSIDGGFEAWARSYPQDITSESR.

The Rhodanese domain occupies 17–105; it reads KEGKTALVDI…WARSYPQDIT (89 aa). Catalysis depends on C65, which acts as the Cysteine persulfide intermediate.

The protein belongs to the GlpE family.

The protein resides in the cytoplasm. The enzyme catalyses thiosulfate + hydrogen cyanide = thiocyanate + sulfite + 2 H(+). It carries out the reaction thiosulfate + [thioredoxin]-dithiol = [thioredoxin]-disulfide + hydrogen sulfide + sulfite + 2 H(+). Its function is as follows. Transferase that catalyzes the transfer of sulfur from thiosulfate to thiophilic acceptors such as cyanide or dithiols. May function in a CysM-independent thiosulfate assimilation pathway by catalyzing the conversion of thiosulfate to sulfite, which can then be used for L-cysteine biosynthesis. The chain is Thiosulfate sulfurtransferase GlpE from Yersinia pestis.